The primary structure comprises 147 residues: D-aminoacyl-tRNA deacylase (147 aa).

Positions 137 to 138 (GP) match the Gly-cisPro motif, important for rejection of L-amino acids motif.

This sequence belongs to the DTD family. As to quaternary structure, homodimer.

Its subcellular location is the cytoplasm. The enzyme catalyses glycyl-tRNA(Ala) + H2O = tRNA(Ala) + glycine + H(+). It catalyses the reaction a D-aminoacyl-tRNA + H2O = a tRNA + a D-alpha-amino acid + H(+). Functionally, an aminoacyl-tRNA editing enzyme that deacylates mischarged D-aminoacyl-tRNAs. Also deacylates mischarged glycyl-tRNA(Ala), protecting cells against glycine mischarging by AlaRS. Acts via tRNA-based rather than protein-based catalysis; rejects L-amino acids rather than detecting D-amino acids in the active site. By recycling D-aminoacyl-tRNA to D-amino acids and free tRNA molecules, this enzyme counteracts the toxicity associated with the formation of D-aminoacyl-tRNA entities in vivo and helps enforce protein L-homochirality. The polypeptide is D-aminoacyl-tRNA deacylase (Acinetobacter baumannii (strain ATCC 17978 / DSM 105126 / CIP 53.77 / LMG 1025 / NCDC KC755 / 5377)).